We begin with the raw amino-acid sequence, 668 residues long: UvrABC system protein B (668 aa).

The 388-residue stretch at 36–423 folds into the Helicase ATP-binding domain; that stretch reads DNIKGGEKAQ…TETVVEQIIR (388 aa). Residue 49-56 coordinates ATP; it reads GATGTGKT. The short motif at 102–125 is the Beta-hairpin element; sequence YYDYYQPEAYVPSSDTYIEKDSSI. The region spanning 440 to 606 is the Helicase C-terminal domain; that stretch reads QMDDLLGEIN…TIKKEIRDLI (167 aa). Residues 632–667 form the UVR domain; it reads QEAIKKLQKQMHEAAELLDFELAAQIRDMVLELKSM.

It belongs to the UvrB family. As to quaternary structure, forms a heterotetramer with UvrA during the search for lesions. Interacts with UvrC in an incision complex.

It localises to the cytoplasm. Functionally, the UvrABC repair system catalyzes the recognition and processing of DNA lesions. A damage recognition complex composed of 2 UvrA and 2 UvrB subunits scans DNA for abnormalities. Upon binding of the UvrA(2)B(2) complex to a putative damaged site, the DNA wraps around one UvrB monomer. DNA wrap is dependent on ATP binding by UvrB and probably causes local melting of the DNA helix, facilitating insertion of UvrB beta-hairpin between the DNA strands. Then UvrB probes one DNA strand for the presence of a lesion. If a lesion is found the UvrA subunits dissociate and the UvrB-DNA preincision complex is formed. This complex is subsequently bound by UvrC and the second UvrB is released. If no lesion is found, the DNA wraps around the other UvrB subunit that will check the other stand for damage. The protein is UvrABC system protein B of Streptococcus thermophilus (strain CNRZ 1066).